A 200-amino-acid polypeptide reads, in one-letter code: Claudin-11 (200 aa).

Position 1 (methionine 1) is a topological domain, cytoplasmic. A helical transmembrane segment spans residues 2–22 (VATCLQVVGFVTSFVGWIGVI). At 23 to 75 (VTTSTNDWVVTCGYTIPTCRKLDELGSKGLWADCVMATGLYHCKPLVDILPCR) the chain is on the extracellular side. Residues 76–96 (ALMIAASVLGLPAILLLLTVL) traverse the membrane as a helical segment. The Cytoplasmic portion of the chain corresponds to 97–115 (PCIRMGQEPGVAKYRRAQL). Residues 116–136 (AGVLLILLALCAIVATIWFPV) form a helical membrane-spanning segment. Over 137 to 150 (CAHRETTIVSFGYS) the chain is Extracellular. A helical transmembrane segment spans residues 151–171 (LYAGWIGAVLCLVGGCVILCC). Residues 172–200 (AGDAQAFGENRFYYTAGSSSPTHAKSAHV) lie on the Cytoplasmic side of the membrane. 2 positions are modified to phosphoserine: serine 190 and serine 191.

Belongs to the claudin family. Interacts with tetraspanin-3/TSPAN3. Interacts with OCLN.

The protein resides in the cell junction. It localises to the tight junction. The protein localises to the cell membrane. In terms of biological role, plays a major role in tight junction-specific obliteration of the intercellular space, through calcium-independent cell-adhesion activity. The chain is Claudin-11 (CLDN11) from Pongo abelii (Sumatran orangutan).